Reading from the N-terminus, the 433-residue chain is Trigger factor (433 aa).

A PPIase FKBP-type domain is found at 163 to 248 (GDTVNIDFSG…VNEIKFKEVP (86 aa)).

The protein belongs to the FKBP-type PPIase family. Tig subfamily.

It localises to the cytoplasm. It carries out the reaction [protein]-peptidylproline (omega=180) = [protein]-peptidylproline (omega=0). Involved in protein export. Acts as a chaperone by maintaining the newly synthesized protein in an open conformation. Functions as a peptidyl-prolyl cis-trans isomerase. The chain is Trigger factor from Staphylococcus aureus (strain Newman).